A 153-amino-acid chain; its full sequence is Superoxide dismutase [Cu-Zn] (153 aa).

Cu cation-binding residues include histidine 46, histidine 48, and histidine 63. Cysteine 57 and cysteine 146 form a disulfide bridge. Zn(2+)-binding residues include histidine 63, histidine 71, histidine 80, and aspartate 83. Histidine 120 contacts Cu cation.

The protein belongs to the Cu-Zn superoxide dismutase family. In terms of assembly, homodimer. Cu cation serves as cofactor. Requires Zn(2+) as cofactor.

It is found in the cytoplasm. It catalyses the reaction 2 superoxide + 2 H(+) = H2O2 + O2. Functionally, destroys radicals which are normally produced within the cells and which are toxic to biological systems. This is Superoxide dismutase [Cu-Zn] (SODCC) from Solidago canadensis var. scabra (Tall goldenrod).